Reading from the N-terminus, the 56-residue chain is Frontoxin I (56 aa).

Intrachain disulfides connect cysteine 3–cysteine 22, cysteine 17–cysteine 39, cysteine 41–cysteine 52, and cysteine 53–cysteine 56.

It belongs to the three-finger toxin family. Short-chain subfamily. Type I alpha-neurotoxin sub-subfamily. As to expression, expressed by the venom gland.

It is found in the secreted. Its function is as follows. Binds to muscle nicotinic acetylcholine receptor (nAChR) and inhibit acetylcholine from binding to the receptor, thereby impairing neuromuscular transmission. In Micrurus frontalis (Coral snake), this protein is Frontoxin I.